We begin with the raw amino-acid sequence, 223 residues long: Endonuclease V (223 aa).

Mg(2+) is bound by residues Asp35 and Asp103.

Belongs to the endonuclease V family. Mg(2+) is required as a cofactor.

The protein localises to the cytoplasm. The enzyme catalyses Endonucleolytic cleavage at apurinic or apyrimidinic sites to products with a 5'-phosphate.. Functionally, DNA repair enzyme involved in the repair of deaminated bases. Selectively cleaves double-stranded DNA at the second phosphodiester bond 3' to a deoxyinosine leaving behind the intact lesion on the nicked DNA. This chain is Endonuclease V, found in Shigella dysenteriae serotype 1 (strain Sd197).